The chain runs to 357 residues: Arginine kinase (357 aa).

The residue at position 2 (A2) is an N-acetylalanine. In terms of domain architecture, Phosphagen kinase N-terminal spans 9–91 (KLEEGFKKLE…FDPIIEDYHK (83 aa)). 64 to 68 (GVGVY) is a binding site for L-arginine. The Phosphagen kinase C-terminal domain occupies 119 to 356 (FVISTRVRCG…LELIKIEKEM (238 aa)). Residues 122–126 (STRVR) and H185 contribute to the ATP site. E225 lines the L-arginine pocket. Residue R229 coordinates ATP. C271 is an L-arginine binding site. Residues 280 to 284 (RASVH) and 309 to 314 (RGTRGE) each bind ATP. L-arginine is bound at residue E314.

It belongs to the ATP:guanido phosphotransferase family.

It catalyses the reaction L-arginine + ATP = N(omega)-phospho-L-arginine + ADP + H(+). This chain is Arginine kinase, found in Carcinus maenas (Common shore crab).